Consider the following 75-residue polypeptide: Protein CYSTEINE-RICH TRANSMEMBRANE MODULE 5 (75 aa).

Positions 1–29 (MSQYSQNQYAGAYPTPPVSTGPYVAPPPL) are disordered. The segment covering 14-29 (PTPPVSTGPYVAPPPL) has biased composition (pro residues). The helical transmembrane segment at 52 to 69 (AADGFLKGCLATMLACCV) threads the bilayer.

It belongs to the CYSTM1 family. As to quaternary structure, heterodimers. Interacts with CYSTM7 and WIH1/CYSTM13. Mostly expressed in roots, stems, rosette leaves and siliques and, to a lower extent, in flowers and cauline leaves.

The protein localises to the cell membrane. Its subcellular location is the nucleus. Its function is as follows. Involved in resistance to abiotic stress. In Arabidopsis thaliana (Mouse-ear cress), this protein is Protein CYSTEINE-RICH TRANSMEMBRANE MODULE 5.